The following is a 1295-amino-acid chain: Phosphoribosylformylglycinamidine synthase (1295 aa).

Residues 305–316, 384–386, and Ala-676 each bind ATP; these read GAATGSGGEIRD and TGY. 4 residues coordinate Mg(2+): Asp-677, Glu-716, Asn-720, and Asp-884. Ser-886 lines the ATP pocket. Positions 1042–1295 constitute a Glutamine amidotransferase type-1 domain; that stretch reads VAILREQGVN…MFRNARKHLG (254 aa). Cys-1135 serves as the catalytic Nucleophile. Residues His-1260 and Glu-1262 contribute to the active site.

This sequence in the N-terminal section; belongs to the FGAMS family. Monomer.

The protein resides in the cytoplasm. It carries out the reaction N(2)-formyl-N(1)-(5-phospho-beta-D-ribosyl)glycinamide + L-glutamine + ATP + H2O = 2-formamido-N(1)-(5-O-phospho-beta-D-ribosyl)acetamidine + L-glutamate + ADP + phosphate + H(+). It functions in the pathway purine metabolism; IMP biosynthesis via de novo pathway; 5-amino-1-(5-phospho-D-ribosyl)imidazole from N(2)-formyl-N(1)-(5-phospho-D-ribosyl)glycinamide: step 1/2. Functionally, phosphoribosylformylglycinamidine synthase involved in the purines biosynthetic pathway. Catalyzes the ATP-dependent conversion of formylglycinamide ribonucleotide (FGAR) and glutamine to yield formylglycinamidine ribonucleotide (FGAM) and glutamate. The protein is Phosphoribosylformylglycinamidine synthase of Idiomarina loihiensis (strain ATCC BAA-735 / DSM 15497 / L2-TR).